Reading from the N-terminus, the 164-residue chain is Large ribosomal subunit protein uL15 (164 aa).

Basic residues predominate over residues 1-33; sequence MTSKKRRQRGSRTHGGGTHKNRRGAGHRGGRGR. Disordered stretches follow at residues 1 to 59 and 137 to 164; these read MTSK…PGAE and AGGS…NDEN. Residues 34 to 43 show a composition bias toward basic and acidic residues; it reads AGRDKHEQHN. The span at 153-164 shows a compositional bias: acidic residues; sequence GEDEEPNSNDEN.

Belongs to the universal ribosomal protein uL15 family. In terms of assembly, part of the 50S ribosomal subunit.

Its function is as follows. Binds to the 23S rRNA. This is Large ribosomal subunit protein uL15 from Haloquadratum walsbyi (strain DSM 16790 / HBSQ001).